The chain runs to 171 residues: MKKPTSAPRSKAFGKQRRKTREELNQEARDRKRLKKHRGHAPGSRAAGGNSASGGGNQNQQKDPRIGSKTPVPLGVTEKVTQQHKPKSEKPMLSPQAELDLLETDERLDALLERLEAGETLSAEDQAWVDAKLDRIDELMQKLGLSYDDDEEDDEEDEKQEDMMRLLRGGN.

Disordered regions lie at residues 1–99 and 145–171; these read MKKP…QAEL and LSYDDDEEDDEEDEKQEDMMRLLRGGN. Residues 20–30 are compositionally biased toward basic and acidic residues; the sequence is TREELNQEARD. A compositionally biased stretch (basic residues) spans 31 to 40; the sequence is RKRLKKHRGH. Residues 147 to 160 are compositionally biased toward acidic residues; that stretch reads YDDDEEDDEEDEKQ.

The protein belongs to the YihI family. As to quaternary structure, interacts with Der.

Its function is as follows. A GTPase-activating protein (GAP) that modifies Der/EngA GTPase function. May play a role in ribosome biogenesis. The chain is Der GTPase-activating protein YihI from Salmonella agona (strain SL483).